A 245-amino-acid chain; its full sequence is 1-(5-phosphoribosyl)-5-[(5-phosphoribosylamino)methylideneamino] imidazole-4-carboxamide isomerase (245 aa).

The active-site Proton acceptor is Asp11. Catalysis depends on Asp132, which acts as the Proton donor.

The protein belongs to the HisA/HisF family.

It is found in the cytoplasm. It carries out the reaction 1-(5-phospho-beta-D-ribosyl)-5-[(5-phospho-beta-D-ribosylamino)methylideneamino]imidazole-4-carboxamide = 5-[(5-phospho-1-deoxy-D-ribulos-1-ylimino)methylamino]-1-(5-phospho-beta-D-ribosyl)imidazole-4-carboxamide. It functions in the pathway amino-acid biosynthesis; L-histidine biosynthesis; L-histidine from 5-phospho-alpha-D-ribose 1-diphosphate: step 4/9. This Xanthobacter autotrophicus (strain ATCC BAA-1158 / Py2) protein is 1-(5-phosphoribosyl)-5-[(5-phosphoribosylamino)methylideneamino] imidazole-4-carboxamide isomerase.